We begin with the raw amino-acid sequence, 521 residues long: Feruloyl esterase B (521 aa).

The first 17 residues, 1–17 (MKVASLLSLALPGAALA), serve as a signal peptide directing secretion. Intrachain disulfides connect Cys26/Cys72 and Cys61/Cys111. Residues Asn37, Asn51, Asn77, Asn95, Asn144, and Asn177 are each glycosylated (N-linked (GlcNAc...) asparagine). 3 cysteine pairs are disulfide-bonded: Cys184–Cys438, Cys253–Cys270, and Cys279–Cys288. The active-site Acyl-ester intermediate is the Ser185. Residues Asp254, Asp257, Ala259, Asp261, and Ile263 each contribute to the Ca(2+) site. N-linked (GlcNAc...) asparagine glycans are attached at residues Asn284, Asn347, Asn352, and Asn378. Residues Asp397 and His437 each act as charge relay system in the active site. Asn488 and Asn511 each carry an N-linked (GlcNAc...) asparagine glycan. A disulfide bond links Cys498 and Cys520.

The protein belongs to the tannase family. Homodimer. Glycosylated.

The protein localises to the secreted. It carries out the reaction feruloyl-polysaccharide + H2O = ferulate + polysaccharide.. Inhibited by the specific serine esterase inhibitor AEBSF. Involved in degradation of plant cell walls. Hydrolyzes of the feruloyl-arabinose ester bond in arabinoxylans as well as the feruloyl-galactose and feruloyl-arabinose ester bonds in pectin. The polypeptide is Feruloyl esterase B (faeB) (Aspergillus niger).